We begin with the raw amino-acid sequence, 580 residues long: Arrestin domain-containing protein A (580 aa).

N-linked (GlcNAc...) asparagine glycans are attached at residues N27, N33, and N60. The interval 31 to 54 (NVNTTSSHHHHHSNSGNAEVSFNG) is disordered. Disordered regions lie at residues 67-86 (ETHSGHHHHHSNGGNAEISI) and 95-114 (MTMSVTDSNSGHHHHHHKES). A helical transmembrane segment spans residues 118-138 (NLSLGGIVGAVVGAVTGGVMI). N-linked (GlcNAc...) asparagine glycosylation is found at N149, N341, and N342. The segment at 468 to 528 (DEHATACRKC…VCEECYPIAT (61 aa)) adopts an FYVE-type zinc-finger fold. The Zn(2+) site is built by C474, C477, C490, C493, C498, C501, C520, and C523.

This sequence belongs to the arrestin family.

It is found in the membrane. The chain is Arrestin domain-containing protein A (adcA) from Dictyostelium discoideum (Social amoeba).